Consider the following 153-residue polypeptide: Glutamyl-tRNA(Gln) amidotransferase subunit C, mitochondrial (153 aa).

The tract at residues 31 to 55 (HPTKVPQQPEPNAFPDLDNNTDDDP) is disordered.

It belongs to the GatC family. In terms of assembly, subunit of the heterotrimeric GatCAB amidotransferase (AdT) complex, composed of A, B and C subunits.

It localises to the mitochondrion. The enzyme catalyses L-glutamyl-tRNA(Gln) + L-glutamine + ATP + H2O = L-glutaminyl-tRNA(Gln) + L-glutamate + ADP + phosphate + H(+). In terms of biological role, allows the formation of correctly charged Gln-tRNA(Gln) through the transamidation of misacylated Glu-tRNA(Gln) in the mitochondria. The reaction takes place in the presence of glutamine and ATP through an activated gamma-phospho-Glu-tRNA(Gln). This chain is Glutamyl-tRNA(Gln) amidotransferase subunit C, mitochondrial, found in Drosophila willistoni (Fruit fly).